Here is a 113-residue protein sequence, read N- to C-terminus: Prefoldin subunit beta (113 aa).

This sequence belongs to the prefoldin subunit beta family. In terms of assembly, heterohexamer of two alpha and four beta subunits.

It localises to the cytoplasm. Molecular chaperone capable of stabilizing a range of proteins. Seems to fulfill an ATP-independent, HSP70-like function in archaeal de novo protein folding. The protein is Prefoldin subunit beta of Methanococcus maripaludis (strain C7 / ATCC BAA-1331).